We begin with the raw amino-acid sequence, 268 residues long: Protein limb expression 1 homolog (268 aa).

Belongs to the LIX1 family. As to quaternary structure, interacts with ft (via intracellular domain) and ds (via intracellular domain).

The protein localises to the apical cell membrane. It localises to the cytoplasm. Component of the Fat (ft) signaling pathway that functions in normal development of various organs such as the wing and leg. In developing imaginal disks, involved in regulating both the protein levels and apical localization of ft and ds. Involved in establishing planar cell polarity (PCP) along the anterior-posterior axis of the wing (the early Fz signaling event), probably by acting upstream of ds and ft to regulate Fz activity. The protein is Protein limb expression 1 homolog of Drosophila melanogaster (Fruit fly).